The chain runs to 270 residues: F-actin-capping protein subunit beta (270 aa).

A compositionally biased stretch (polar residues) spans 245–258 (QTRSQKSTTDSQEQ). A disordered region spans residues 245–270 (QTRSQKSTTDSQEQQQKEVIKGLQNL).

It belongs to the F-actin-capping protein beta subunit family. As to quaternary structure, component of the F-actin capping complex, composed of a heterodimer of an alpha and a beta subunit.

The protein localises to the cytoplasm. The protein resides in the cytoskeleton. It is found in the actin patch. Functionally, F-actin-capping proteins bind in a Ca(2+)-independent manner to the fast growing ends of actin filaments (barbed end) thereby blocking the exchange of subunits at these ends. Unlike other capping proteins (such as gelsolin and severin), these proteins do not sever actin filaments. This is F-actin-capping protein subunit beta (CAP2) from Candida glabrata (strain ATCC 2001 / BCRC 20586 / JCM 3761 / NBRC 0622 / NRRL Y-65 / CBS 138) (Yeast).